A 287-amino-acid polypeptide reads, in one-letter code: Large ribosomal subunit protein uL2 (287 aa).

A disordered region spans residues Val-220–Ser-287. The segment covering Val-271–Ser-287 has biased composition (basic residues).

The protein belongs to the universal ribosomal protein uL2 family. As to quaternary structure, part of the 50S ribosomal subunit. Forms a bridge to the 30S subunit in the 70S ribosome.

In terms of biological role, one of the primary rRNA binding proteins. Required for association of the 30S and 50S subunits to form the 70S ribosome, for tRNA binding and peptide bond formation. It has been suggested to have peptidyltransferase activity; this is somewhat controversial. Makes several contacts with the 16S rRNA in the 70S ribosome. This is Large ribosomal subunit protein uL2 from Prochlorococcus marinus (strain MIT 9515).